A 264-amino-acid chain; its full sequence is Thymidylate synthase (264 aa).

Arginine 21 lines the dUMP pocket. Histidine 51 lines the (6R)-5,10-methylene-5,6,7,8-tetrahydrofolate pocket. 126–127 (RR) contacts dUMP. Cysteine 146 serves as the catalytic Nucleophile. DUMP is bound by residues 166–169 (RSVD), asparagine 177, and 207–209 (HLY). A (6R)-5,10-methylene-5,6,7,8-tetrahydrofolate-binding site is contributed by aspartate 169. Residue alanine 263 coordinates (6R)-5,10-methylene-5,6,7,8-tetrahydrofolate.

Belongs to the thymidylate synthase family. Bacterial-type ThyA subfamily. In terms of assembly, homodimer.

It localises to the cytoplasm. The catalysed reaction is dUMP + (6R)-5,10-methylene-5,6,7,8-tetrahydrofolate = 7,8-dihydrofolate + dTMP. The protein operates within pyrimidine metabolism; dTTP biosynthesis. Functionally, catalyzes the reductive methylation of 2'-deoxyuridine-5'-monophosphate (dUMP) to 2'-deoxythymidine-5'-monophosphate (dTMP) while utilizing 5,10-methylenetetrahydrofolate (mTHF) as the methyl donor and reductant in the reaction, yielding dihydrofolate (DHF) as a by-product. This enzymatic reaction provides an intracellular de novo source of dTMP, an essential precursor for DNA biosynthesis. The sequence is that of Thymidylate synthase from Geobacillus thermodenitrificans (strain NG80-2).